A 236-amino-acid polypeptide reads, in one-letter code: Small ribosomal subunit protein uS2c (236 aa).

It belongs to the universal ribosomal protein uS2 family.

It localises to the plastid. Its subcellular location is the chloroplast. This chain is Small ribosomal subunit protein uS2c (rps2), found in Lolium perenne (Perennial ryegrass).